The following is a 542-amino-acid chain: Homeobox protein ceh-18 (542 aa).

The segment covering 243 to 252 has biased composition (polar residues); the sequence is NTPTQPTASL. The segment at 243 to 264 is disordered; the sequence is NTPTQPTASLTPKKAENRPPVV. Residues 290-364 enclose the POU-specific domain; sequence DDRIDMNELE…LLKEWLADVE (75 aa). Residues 421–480 constitute a DNA-binding region (homeobox); it reads RRRKRTNLDMNQRNALDTFFALNPRPDHDKMTDIANSLELDRDVVRVWFCNRRQKMRRVD. The interval 514–542 is disordered; the sequence is LASCQASNDDSDGTSGSPDAPSNDGCSDL. The span at 517 to 530 shows a compositional bias: polar residues; that stretch reads CQASNDDSDGTSGS.

The protein belongs to the POU transcription factor family. Interacts with akir-1. In terms of tissue distribution, expressed in the gonadal sheath cells that signal the oocyte, but not in the oocyte.

It localises to the nucleus. In terms of biological role, directs gonadal sheath cell differentiation and function. Also directs gonad migration and plays a role in specifying the differentiated phenotypes of epidermal cells during postembryonic development. Plays a role in oogenesis, regulating a sheath cell signal that causes oocytes to maintain diakinesis arrest during meiosis. Negatively regulates oocyte maturation, ovulation and MAPK activation in oocytes when sperm are not available for fertilization. May be recruited by akir-1 to the promoter regions of antimicrobial peptide genes to control gene expression in response to fungal infection. The polypeptide is Homeobox protein ceh-18 (Caenorhabditis elegans).